Consider the following 156-residue polypeptide: RNA polymerase sigma factor SigS (156 aa).

A Polymerase core binding motif is present at residues 29–44; the sequence is EYYQLLLIKMWQLSQI. Residues 126–145 constitute a DNA-binding region (H-T-H motif); it reads QFEIAEIMSLSLSTIKLIKM.

It belongs to the sigma-70 factor family.

Functionally, sigma factors are initiation factors that promote the attachment of RNA polymerase to specific initiation sites and are then released. Sigma-S contributes to the protection against external stress, thus playing a role in cellular fitness and survival. The protein is RNA polymerase sigma factor SigS (sigS) of Staphylococcus aureus (strain Mu50 / ATCC 700699).